We begin with the raw amino-acid sequence, 258 residues long: Insulin-like growth factor-binding protein 4 (258 aa).

A signal peptide spans 1–21; it reads MLSLCLMAALLLAAGPGPSLG. The IGFBP N-terminal domain maps to 23 to 103; it reads EAIHCPPCSE…VHGQGVCMEL (81 aa). 6 disulfide bridges follow: C27-C53, C30-C55, C38-C56, C44-C59, C67-C80, and C74-C100. A glycan (N-linked (GlcNAc...) asparagine) is linked at N125. 4 disulfides stabilise this stretch: C131-C138, C174-C204, C215-C226, and C228-C249. The Thyroglobulin type-1 domain maps to 171-249; sequence QGSCQSELHR…GLEPKGELDC (79 aa). The residue at position 255 (S255) is a Phosphoserine.

Binds IGF2 more than IGF1.

Its subcellular location is the secreted. Functionally, IGF-binding proteins prolong the half-life of the IGFs and have been shown to either inhibit or stimulate the growth promoting effects of the IGFs on cell culture. They alter the interaction of IGFs with their cell surface receptors. The protein is Insulin-like growth factor-binding protein 4 (IGFBP4) of Bos taurus (Bovine).